Consider the following 247-residue polypeptide: ATP synthase subunit a, chloroplastic (247 aa).

5 consecutive transmembrane segments (helical) span residues glutamine 38–valine 58, valine 95–leucine 115, isoleucine 134–threonine 154, leucine 199–leucine 219, and glycine 220–glycine 240.

The protein belongs to the ATPase A chain family. As to quaternary structure, F-type ATPases have 2 components, CF(1) - the catalytic core - and CF(0) - the membrane proton channel. CF(1) has five subunits: alpha(3), beta(3), gamma(1), delta(1), epsilon(1). CF(0) has four main subunits: a, b, b' and c.

The protein localises to the plastid. It localises to the chloroplast thylakoid membrane. Functionally, key component of the proton channel; it plays a direct role in the translocation of protons across the membrane. The polypeptide is ATP synthase subunit a, chloroplastic (Panax ginseng (Korean ginseng)).